Consider the following 898-residue polypeptide: Metalloprotease StcE (898 aa).

The N-terminal stretch at 1-35 (MNTKMNERWRTPMKLKYLSCTILAPLAIGVFSATA) is a signal peptide. A Peptidase M66 domain is found at 296–551 (ELLLHTIDIG…QRFFENKAVF (256 aa)). Zn(2+) is bound at residue His-446. Glu-447 is a catalytic residue. Positions 450 and 456 each coordinate Zn(2+).

The cofactor is Zn(2+).

It localises to the secreted. Inhibited by divalent cation chelators such as BPS and EDTA. In terms of biological role, virulence factor that contributes to intimate adherence of enterohemorrhagic E.coli (EHEC) O157:H7 to host cells. Is able to cleave the secreted human mucin 7 (MUC7) and the glycoprotein 340 (DMBT1/GP340). Also cleaves human C1 inhibitor (SERPING1), a regulator of multiple inflammatory pathways, and binds and localizes it to bacterial and host cell surfaces, protecting them from complement-mediated lysis. Therefore, the current model proposes two roles for StcE during infection: it acts first as a mucinase, allowing passage of EHEC through the oral cavity by cleaving the salivary glycoproteins that are responsible for bacterial aggregation. Similarly, in the colon, StcE cleaves the glycoproteins that protect the intestinal epithelial surface, allowing EHEC to come into close contact with host cell membranes. Secondly, it acts as an anti-inflammatory agent by localizing SERPING1 to cell membranes. This Escherichia coli O157:H7 protein is Metalloprotease StcE (stcE).